The chain runs to 350 residues: UDP-N-acetylenolpyruvoylglucosamine reductase (350 aa).

The FAD-binding PCMH-type domain maps to 24-195; that stretch reads HVEATARWLL…VAVEFNLPLL (172 aa). R172 is a catalytic residue. S245 functions as the Proton donor in the catalytic mechanism. The active site involves E342.

It belongs to the MurB family. It depends on FAD as a cofactor.

It is found in the cytoplasm. The enzyme catalyses UDP-N-acetyl-alpha-D-muramate + NADP(+) = UDP-N-acetyl-3-O-(1-carboxyvinyl)-alpha-D-glucosamine + NADPH + H(+). Its pathway is cell wall biogenesis; peptidoglycan biosynthesis. In terms of biological role, cell wall formation. This is UDP-N-acetylenolpyruvoylglucosamine reductase from Xanthomonas axonopodis pv. citri (strain 306).